The sequence spans 346 residues: Fe(3+) ions import ATP-binding protein FbpC 2 (346 aa).

An ABC transporter domain is found at 2–234; that stretch reads LELHRVSKSF…PNSEDIATFL (233 aa). ATP is bound at residue 34-41; sequence GPSGSGKT.

This sequence belongs to the ABC transporter superfamily. Fe(3+) ion importer (TC 3.A.1.10) family. In terms of assembly, the complex is composed of two ATP-binding proteins (FbpC), two transmembrane proteins (FbpB) and a solute-binding protein (FbpA).

It localises to the cell inner membrane. The catalysed reaction is Fe(3+)(out) + ATP + H2O = Fe(3+)(in) + ADP + phosphate + H(+). Functionally, part of the ABC transporter complex FbpABC involved in Fe(3+) ions import. Responsible for energy coupling to the transport system. This chain is Fe(3+) ions import ATP-binding protein FbpC 2, found in Pectobacterium atrosepticum (strain SCRI 1043 / ATCC BAA-672) (Erwinia carotovora subsp. atroseptica).